We begin with the raw amino-acid sequence, 1189 residues long: Pumilio homolog 1 (1189 aa).

Disordered stretches follow at residues 24-65, 233-288, 491-525, 614-652, and 743-774; these read QHAQ…SSPV, SCLR…QNGI, QQTT…GQQT, AGTT…NNSL, and GPVG…SSLN. Residues 45–58 show a composition bias toward low complexity; that stretch reads QAQPQPAANQALAA. Residues 250–277 show a composition bias toward basic and acidic residues; that stretch reads NDKGDKKNKGTFDGDKLGDLKEEGDVMD. Over residues 491–503 the composition is skewed to low complexity; that stretch reads QQTTQQTQQGQQQ. A compositionally biased stretch (polar residues) spans 512–525; sequence RPLTPNQNQQGQQT. 2 stretches are compositionally biased toward low complexity: residues 627–652 and 764–774; these read QQPQ…NNSL and LSSHGSSSSLN. Positions 829–1171 constitute a PUM-HD domain; the sequence is GRSRLLEDFR…HILAKLEKYY (343 aa). Pumilio repeat units follow at residues 849 to 884, 885 to 920, 921 to 958, 959 to 994, 995 to 1030, 1031 to 1066, 1067 to 1102, and 1106 to 1145; these read EIAG…LVFN, EILQ…ALAE, RIRG…EMVR, ELDG…FIID, AFKG…PILE, ELHQ…KIVA, EIRG…MLID, and TMND…IVMH. The tract at residues 864-868 is adenine-nucleotide binding in RNA target; it reads SRFIQ. A uracil-nucleotide binding in RNA target region spans residues 900–904; that stretch reads NYVIQ. The adenine-nucleotide binding in RNA target stretch occupies residues 936–940; it reads CRVIQ. The segment at 974-978 is non-specific-nucleotide binding in RNA target; the sequence is NHVVQ. The segment at 1010–1014 is adenine-nucleotide binding in RNA target; that stretch reads CRVIQ. The uracil-nucleotide binding in RNA target stretch occupies residues 1046–1050; the sequence is NYVIQ. Guanine-nucleotide binding in RNA target regions lie at residues 1082–1086 and 1083–1086; these read SNVVE and NVVE. Residues 1125 to 1129 are uracil-nucleotide binding in RNA target; the sequence is NYVVQ.

Detected in embryonic male and female gonads, heart, liver and muscle. Detected in adult brain, testis, ovary, heart, lung, spleen, kidney and muscle.

It is found in the cytoplasm. It localises to the P-body. Its subcellular location is the cytoplasmic granule. Functionally, sequence-specific RNA-binding protein that acts as a post-transcriptional repressor by binding the 3'-UTR of mRNA targets. Binds to an RNA consensus sequence, the Pumilio Response Element (PRE), 5'-UGUANAUA-3', that is related to the Nanos Response Element (NRE). Mediates post-transcriptional repression of transcripts via different mechanisms: acts via direct recruitment of the CCR4-POP2-NOT deadenylase leading to translational inhibition and mRNA degradation. Also mediates deadenylation-independent repression by promoting accessibility of miRNAs. The chain is Pumilio homolog 1 (PUM1) from Gallus gallus (Chicken).